A 570-amino-acid polypeptide reads, in one-letter code: Formate--tetrahydrofolate ligase (570 aa).

65 to 72 (TPHGEGKT) provides a ligand contact to ATP.

Belongs to the formate--tetrahydrofolate ligase family.

The catalysed reaction is (6S)-5,6,7,8-tetrahydrofolate + formate + ATP = (6R)-10-formyltetrahydrofolate + ADP + phosphate. Its pathway is one-carbon metabolism; tetrahydrofolate interconversion. The polypeptide is Formate--tetrahydrofolate ligase (Shewanella putrefaciens (strain CN-32 / ATCC BAA-453)).